The chain runs to 229 residues: Coiled-coil domain-containing protein 134 (229 aa).

An N-terminal signal peptide occupies residues 1–22; sequence MDLLQSLAVFFVLLLPGTEVTG. N-linked (GlcNAc...) asparagine glycosylation is present at asparagine 148. The tract at residues 191–229 is disordered; the sequence is PSTDPFQKALREEEKRRKKEEKRKEIRKGPRISRSQSEL. The stretch at 196–218 forms a coiled coil; it reads FQKALREEEKRRKKEEKRKEIRK. The Prevents secretion from ER motif lies at 226-229; that stretch reads QSEL.

Belongs to the CCDC134 family. As to quaternary structure, interacts with TADA2A. Associates with the PCAF complex via TADA2A binding. Post-translationally, O-glycosylated, with additional sialic acid modifications.

It localises to the endoplasmic reticulum lumen. It is found in the secreted. The protein localises to the cytoplasm. The protein resides in the nucleus. In terms of biological role, molecular adapter required to prevent protein hyperglycosylation of HSP90B1: during translation, associates with nascent HSP90B1 and the STT3A catalytic component of the OST-A complex and tethers them to a specialized translocon that forms a microenvironment for HSP90B1 folding. In the CCDC134-containing translocon, STT3A associates with the SRT pseudosubstrate motif of HSP90B1, preventing access to facultative glycosylation sites until folding is completed, preventing hyperglycosylation and subsequent degradation of HSP90B1. In extracellular secreted form, promotes proliferation and activation of CD8(+) T-cells, suggesting a cytokine-like function. May inhibit ERK and JNK signaling activity. May suppress cell migration and invasion activity, via its effects on ERK and JNK signaling. May also localize in the nucleus: enhances stability of the PCAF histone acetyltransferase (HAT) complex member TADA2A and thus promotes PCAF-mediated histone acetyltransferase activity. Has a critical role in the regulation of osteogenesis and bone development. This is Coiled-coil domain-containing protein 134 (Ccdc134) from Rattus norvegicus (Rat).